The chain runs to 363 residues: S-adenosylmethionine:tRNA ribosyltransferase-isomerase (363 aa).

This sequence belongs to the QueA family. In terms of assembly, monomer.

The protein resides in the cytoplasm. The catalysed reaction is 7-aminomethyl-7-carbaguanosine(34) in tRNA + S-adenosyl-L-methionine = epoxyqueuosine(34) in tRNA + adenine + L-methionine + 2 H(+). The protein operates within tRNA modification; tRNA-queuosine biosynthesis. Its function is as follows. Transfers and isomerizes the ribose moiety from AdoMet to the 7-aminomethyl group of 7-deazaguanine (preQ1-tRNA) to give epoxyqueuosine (oQ-tRNA). The polypeptide is S-adenosylmethionine:tRNA ribosyltransferase-isomerase (Brucella abortus (strain S19)).